The primary structure comprises 1022 residues: MSKNGNQDISEFDPLNREFTEAEKQQQMQQEQEFFSQTILDIADDGFMVASSSQATPSISFLSNNRPHGDHKSDPITEAIRKEILEKQRDILREYFVNTNPELAEQIAKEEDDRKFRAFLSNQDNYALINKAFEDTKTKKNLEKAEIVGYKNVLSTYSVANGYQGGFQPVQWENQVSASDLRSTVVKNDEGEELCTLNETTVKTKDLIVAKQDGTQVQINSYREINFPIKLDKANGSMHLSMVALKADGTKPAKDKAVYFTAHYEEGPNGKPQLKEISSPQPLKFVGTGDDAVAYIEHGGEIYTLAVTRGKYKEMMKEVALNHGQSVALSQTIAEDLTHVQGPSHETHKPIIIPNQELESSIEQHTSQQVPPITTFNKSLQPKISQIHQLQPQQAQSSGIPNPVLNAANALSTSMQDLLNNINSYLTKNQDINKQSDLIKEAAIAILNNKKSDFAEKQYNIIDLAKNIFSNKDIIADAKVNVVNTLLETIQNDQNTLDIKKSKILEDTVAITLNSENIELKQKQQILEKVVDIGLSIKDDISRVVAVDSIMDTVIKSNIANEDKEKIFITVFDQINSYEFSNVAKQKLLDSILKKTAETQVLSPEQQQLMNQNLDNITTEHTKRDTIEKVNNILLEPLSNTALKTTNIQVMTSNVLDSPVQIEMKSKLIQVVTKTVAESALVEPKDKTEIVKGIGKTIVTHSDTSLPLHDKVVIMGSVAKGIVESKNDLLDRELIIAGLVDGIYEAKGDNAVVHAISSMIANSNINQSEKEALKRSQDVVSEKVLDKEIQNLDRELKAQNINESKLHDDIYNKTQDVANALKNVITTVLDDNSGQRGVSEEAPKKVSSLLNDISKRTIEKINNLRAMLSQDGNLKTFEEKKDEATKKVDELVKAFDNKSSTEEQQNFIKSNLIDNKTLSREIRLQIIDNLLKAQAQKRAETIENLSAKTEDVRVISGKSELKPISQDEPYIQKAKMVVERDRVDIKDNIKIMSALINARDSIQSENFNKSIHIKKESSFPQR.

Positions 1–33 are disordered; sequence MSKNGNQDISEFDPLNREFTEAEKQQQMQQEQE. Residues 14–24 show a composition bias toward basic and acidic residues; that stretch reads PLNREFTEAEK.

It localises to the cytoplasm. The sequence is that of Antigenic heat-stable 120 kDa protein (sca4) from Rickettsia prowazekii (strain Madrid E).